Reading from the N-terminus, the 232-residue chain is 7-cyano-7-deazaguanine synthase (232 aa).

Position 7–17 (7–17 (CSGGLDSVSLA)) interacts with ATP. The Zn(2+) site is built by Cys185, Cys193, Cys196, and Cys199.

It belongs to the QueC family. The cofactor is Zn(2+).

The catalysed reaction is 7-carboxy-7-deazaguanine + NH4(+) + ATP = 7-cyano-7-deazaguanine + ADP + phosphate + H2O + H(+). The protein operates within purine metabolism; 7-cyano-7-deazaguanine biosynthesis. Its function is as follows. Catalyzes the ATP-dependent conversion of 7-carboxy-7-deazaguanine (CDG) to 7-cyano-7-deazaguanine (preQ(0)). The chain is 7-cyano-7-deazaguanine synthase from Brucella abortus (strain S19).